Reading from the N-terminus, the 1337-residue chain is Sister chromatid cohesion protein PDS5 homolog A (1337 aa).

Residue methionine 1 is modified to N-acetylmethionine. Residues 393-429 (ALVNDQLLGFVRERTLDKRWRVRKEAMMGLAQLYKKY) form an HEAT repeat. Phosphoserine is present on serine 1097. Position 1146 is an N6-acetyllysine (lysine 1146). Residues 1150–1337 (ATGRKPYVRS…PAERQIDLQR (188 aa)) form a disordered region. The span at 1159-1180 (STGTETGSNINVNSELNPSTGN) shows a compositional bias: polar residues. The residue at position 1195 (serine 1195) is a Phosphoserine. Position 1208 is a phosphothreonine (threonine 1208). Lysine 1211 carries the post-translational modification N6-acetyllysine. Residues 1223–1233 (SDQATQGNISS) are compositionally biased toward polar residues. An N6-acetyllysine modification is found at lysine 1290. Serine 1305 is modified (phosphoserine). Over residues 1321–1337 (DLAKKAAPAERQIDLQR) the composition is skewed to basic and acidic residues.

This sequence belongs to the PDS5 family. In terms of assembly, interacts with the cohesin complex. Interacts with WAPL (via FGF motifs) or CDCA5 (via the FGF motif); the interaction is direct, cohesin-dependent and competitive. Interacts with SMC3. Interacts with TP63. As to expression, highest level in colon. Low levels in lung, ovary, breast and kidney. Reduced level in renal tumor tissue. Isoform 2 is expressed in kidney.

Its subcellular location is the nucleus. In terms of biological role, probable regulator of sister chromatid cohesion in mitosis which may stabilize cohesin complex association with chromatin. May couple sister chromatid cohesion during mitosis to DNA replication. Cohesion ensures that chromosome partitioning is accurate in both meiotic and mitotic cells and plays an important role in DNA repair. This chain is Sister chromatid cohesion protein PDS5 homolog A, found in Homo sapiens (Human).